The chain runs to 95 residues: Neutrophil antibiotic peptide NP-5 (95 aa).

Positions 1–19 (MRTLALLAAILLVTLQAQA) are cleaved as a signal peptide. The propeptide occupies 20–62 (ELHSGMADDGVDQQQPRAQDLDVAVYIKQDETSPLEVLGAKAG). 3 disulfide bridges follow: Cys65–Cys93, Cys67–Cys82, and Cys72–Cys92.

The protein belongs to the alpha-defensin family.

It localises to the secreted. Functionally, microbicidal activity. In Oryctolagus cuniculus (Rabbit), this protein is Neutrophil antibiotic peptide NP-5.